The following is a 37-amino-acid chain: MIEPLLCGIVLGLIPVTLAGLFFAAYQQYKRGSQLEL.

Residues Leu-5–Ala-25 form a helical membrane-spanning segment.

It belongs to the PetG family. As to quaternary structure, the 4 large subunits of the cytochrome b6-f complex are cytochrome b6, subunit IV (17 kDa polypeptide, PetD), cytochrome f and the Rieske protein, while the 4 small subunits are PetG, PetL, PetM and PetN. The complex functions as a dimer.

Its subcellular location is the cellular thylakoid membrane. Component of the cytochrome b6-f complex, which mediates electron transfer between photosystem II (PSII) and photosystem I (PSI), cyclic electron flow around PSI, and state transitions. PetG is required for either the stability or assembly of the cytochrome b6-f complex. The sequence is that of Cytochrome b6-f complex subunit 5 from Thermosynechococcus vestitus (strain NIES-2133 / IAM M-273 / BP-1).